Here is a 338-residue protein sequence, read N- to C-terminus: Probable family 20 transposase (338 aa).

This sequence belongs to the transposase 20 family.

Its function is as follows. Required for the transposition of an insertion element. This is Probable family 20 transposase from Pseudomonas aeruginosa (strain ATCC 15692 / DSM 22644 / CIP 104116 / JCM 14847 / LMG 12228 / 1C / PRS 101 / PAO1).